Reading from the N-terminus, the 675-residue chain is Methionine--tRNA ligase (675 aa).

Residues 12 to 22 (PYANGPIHLGH) carry the 'HIGH' region motif. Residues Cys-143, Cys-146, Cys-156, and Cys-159 each contribute to the Zn(2+) site. The 'KMSKS' region signature appears at 328–332 (KMSKS). Lys-331 provides a ligand contact to ATP. The tRNA-binding domain maps to 574-675 (DFAKVDLRIA…QGAQPGMRVK (102 aa)).

Belongs to the class-I aminoacyl-tRNA synthetase family. MetG type 1 subfamily. As to quaternary structure, homodimer. It depends on Zn(2+) as a cofactor.

The protein localises to the cytoplasm. The catalysed reaction is tRNA(Met) + L-methionine + ATP = L-methionyl-tRNA(Met) + AMP + diphosphate. Is required not only for elongation of protein synthesis but also for the initiation of all mRNA translation through initiator tRNA(fMet) aminoacylation. The protein is Methionine--tRNA ligase of Alkalilimnicola ehrlichii (strain ATCC BAA-1101 / DSM 17681 / MLHE-1).